Consider the following 489-residue polypeptide: Putative ABC transporter ATP-binding protein TDE_0282 (489 aa).

2 consecutive ABC transporter domains span residues 2–241 and 269–487; these read ITLR…SMKL and FAVK…MQLE. Residues 36–43 and 301–308 contribute to the ATP site; these read GASGCGKT and GENGAGKT.

Belongs to the ABC transporter superfamily.

Its subcellular location is the cell inner membrane. Functionally, probably part of an ABC transporter complex. Responsible for energy coupling to the transport system. This is Putative ABC transporter ATP-binding protein TDE_0282 from Treponema denticola (strain ATCC 35405 / DSM 14222 / CIP 103919 / JCM 8153 / KCTC 15104).